Here is a 621-residue protein sequence, read N- to C-terminus: Hemolysin ahh1 (621 aa).

The N-terminal stretch at 1 to 30 (MKNKKPRKFITQAPTLSLLALALLAGSVQA) is a signal peptide. The Ricin B-type lectin domain occupies 491–610 (RPVNLQLGGF…QNVSVRTLTS (120 aa)).

This sequence belongs to the HlyA hemolysin family.

Functionally, bacterial hemolysins are exotoxins that attack blood cell membranes and cause cell rupture by mechanisms not clearly defined. The sequence is that of Hemolysin ahh1 (ahh1) from Aeromonas hydrophila subsp. hydrophila (strain ATCC 7966 / DSM 30187 / BCRC 13018 / CCUG 14551 / JCM 1027 / KCTC 2358 / NCIMB 9240 / NCTC 8049).